We begin with the raw amino-acid sequence, 178 residues long: Caveolin-1 (178 aa).

The residue at position 2 (S2) is an N-acetylserine. Position 2 is a phosphoserine (S2). A required for homooligomerization region spans residues 2-94; sequence SGGKYVDSEG…WKASFTTFTV (93 aa). The Cytoplasmic segment spans residues 2-104; it reads SGGKYVDSEG…TKYWFYRLLS (103 aa). K5 is modified (N6-acetyllysine; alternate). A Glycyl lysine isopeptide (Lys-Gly) (interchain with G-Cter in ubiquitin); alternate cross-link involves residue K5. Phosphotyrosine is present on Y6. S9 is modified (phosphoserine). A Phosphotyrosine; by ABL1 modification is found at Y14. A Phosphotyrosine modification is found at Y25. Glycyl lysine isopeptide (Lys-Gly) (interchain with G-Cter in ubiquitin) cross-links involve residues K26 and K30. S37 is modified (phosphoserine). Glycyl lysine isopeptide (Lys-Gly) (interchain with G-Cter in ubiquitin) cross-links involve residues K39, K47, and K57. Residues 82–94 form an interaction with CAVIN3 region; sequence DGIWKASFTTFTV. An intramembrane region (helical) is located at residues 105–125; that stretch reads ALFGIPMALIWGIYFAILSFL. Over 126-178 the chain is Cytoplasmic; the sequence is HIWAVVPCIKSFLIEIQCISRVYSIYIHTVCDPLFEAIGKIFSNVRIGLQKEI. Positions 131–142 are interacts with SPRY1, SPRY2, SPRY3 and SPRY4; sequence VPCIKSFLIEIQ. S-palmitoyl cysteine attachment occurs at residues C133, C143, and C156. The interacts with SPRY1, SPRY2, and SPRY4 stretch occupies residues 149-160; it reads SIYIHTVCDPLF. The interacts with SPRY1, SPRY2, SPRY3 and SPRY4 stretch occupies residues 167-178; the sequence is FSNVRIGLQKEI.

It belongs to the caveolin family. As to quaternary structure, homooligomer. Interacts with GLIPR2. Interacts with NOSTRIN. Interacts with SNAP25 and STX1A. Interacts (via the N-terminus) with DPP4; the interaction is direct. Interacts with CTNNB1, CDH1 and JUP. Interacts with PACSIN2; this interaction induces membrane tubulation. Interacts with SLC7A9. Interacts with BMX and BTK. Interacts with TGFBR1. Interacts with CAVIN3 (via leucine-zipper domain) in a cholesterol-sensitive manner. Interacts with CAVIN1. Interacts with EHD2 in a cholesterol-dependent manner. Forms a ternary complex with UBXN6 and VCP; mediates CAV1 targeting to lysosomes for degradation. Interacts with ABCG1; this interaction regulates ABCG1-mediated cholesterol efflux. Interacts with NEU3; this interaction enhances NEU3 sialidase activity within caveola. Interacts (via C-terminus) with SPRY1, SPRY2 (via C-terminus), SPRY3, and SPRY4. Interacts with IGFBP5; this interaction allows trafficking of IGFBP5 from the plasma membrane to the nucleus. Post-translationally, phosphorylated at Tyr-14 by ABL1 in response to oxidative stress. Ubiquitinated. Undergo monoubiquitination and multi- and/or polyubiquitination. Monoubiquitination of N-terminal lysines promotes integration in a ternary complex with UBXN6 and VCP which promotes oligomeric CAV1 targeting to lysosomes for degradation. Ubiquitinated by ZNRF1; leading to degradation and modulation of the TLR4-mediated immune response.

It is found in the golgi apparatus membrane. The protein localises to the cell membrane. It localises to the membrane. Its subcellular location is the caveola. The protein resides in the membrane raft. Its function is as follows. May act as a scaffolding protein within caveolar membranes. Forms a stable heterooligomeric complex with CAV2 that targets to lipid rafts and drives caveolae formation. Mediates the recruitment of CAVIN proteins (CAVIN1/2/3/4) to the caveolae. Interacts directly with G-protein alpha subunits and can functionally regulate their activity. Involved in the costimulatory signal essential for T-cell receptor (TCR)-mediated T-cell activation. Its binding to DPP4 induces T-cell proliferation and NF-kappa-B activation in a T-cell receptor/CD3-dependent manner. Recruits CTNNB1 to caveolar membranes and may regulate CTNNB1-mediated signaling through the Wnt pathway. Negatively regulates TGFB1-mediated activation of SMAD2/3 by mediating the internalization of TGFBR1 from membrane rafts leading to its subsequent degradation. Binds 20(S)-hydroxycholesterol (20(S)-OHC). In Saimiri boliviensis boliviensis (Bolivian squirrel monkey), this protein is Caveolin-1 (CAV1).